Reading from the N-terminus, the 293-residue chain is 33 kDa chaperonin (293 aa).

Disulfide bonds link C239-C241 and C272-C275.

It belongs to the HSP33 family. Under oxidizing conditions two disulfide bonds are formed involving the reactive cysteines. Under reducing conditions zinc is bound to the reactive cysteines and the protein is inactive.

It is found in the cytoplasm. Its function is as follows. Redox regulated molecular chaperone. Protects both thermally unfolding and oxidatively damaged proteins from irreversible aggregation. Plays an important role in the bacterial defense system toward oxidative stress. This chain is 33 kDa chaperonin, found in Limosilactobacillus fermentum (strain NBRC 3956 / LMG 18251) (Lactobacillus fermentum).